The sequence spans 489 residues: Glycogen synthase (489 aa).

R20 is a binding site for ADP-alpha-D-glucose.

The protein belongs to the glycosyltransferase 1 family. Bacterial/plant glycogen synthase subfamily.

The enzyme catalyses [(1-&gt;4)-alpha-D-glucosyl](n) + ADP-alpha-D-glucose = [(1-&gt;4)-alpha-D-glucosyl](n+1) + ADP + H(+). The protein operates within glycan biosynthesis; glycogen biosynthesis. Its function is as follows. Synthesizes alpha-1,4-glucan chains using ADP-glucose. The polypeptide is Glycogen synthase (Chlorobium phaeovibrioides (strain DSM 265 / 1930) (Prosthecochloris vibrioformis (strain DSM 265))).